The following is a 1004-amino-acid chain: 2-oxoglutarate dehydrogenase E1 component (1004 aa).

Belongs to the alpha-ketoglutarate dehydrogenase family. As to quaternary structure, homodimer. Part of the 2-oxoglutarate dehydrogenase (OGDH) complex composed of E1 (2-oxoglutarate dehydrogenase), E2 (dihydrolipoamide succinyltransferase) and E3 (dihydrolipoamide dehydrogenase); the complex contains multiple copies of the three enzymatic components (E1, E2 and E3). Thiamine diphosphate serves as cofactor.

It carries out the reaction N(6)-[(R)-lipoyl]-L-lysyl-[protein] + 2-oxoglutarate + H(+) = N(6)-[(R)-S(8)-succinyldihydrolipoyl]-L-lysyl-[protein] + CO2. In terms of biological role, E1 component of the 2-oxoglutarate dehydrogenase (OGDH) complex which catalyzes the decarboxylation of 2-oxoglutarate, the first step in the conversion of 2-oxoglutarate to succinyl-CoA and CO(2). The polypeptide is 2-oxoglutarate dehydrogenase E1 component (Brucella suis biovar 1 (strain 1330)).